The following is a 470-amino-acid chain: Protein escargot (470 aa).

The disordered stretch occupies residues 271 to 309; that stretch reads LNLNTSQPGEQAAAKTGDMSPETMPNASAKKDKNQPPRY. 4 consecutive C2H2-type zinc fingers follow at residues 309 to 331, 344 to 366, 370 to 392, and 398 to 420; these read YQCP…QQFH, FSCK…IRTH, CKCN…IRTH, and FSCQ…LQTH. A C2H2-type 5; atypical zinc finger spans residues 426–449; sequence YSCTSCSKTFSRMSLLTKHSEGGC. The interval 448–470 is disordered; the sequence is GCPGGSAGSSSSSELNYAGYAEP.

The protein belongs to the snail C2H2-type zinc-finger protein family. In terms of tissue distribution, expression is complex and dynamic. In early embryogenesis, expression begins on the dorsal side of the embryo. Expressed in a pattern of longitudinal stripes early in germband elongation. Later in embryogenesis, expression is in cells that correspond to the wing, haltere, leg and genital imaginal disks and the abdominal histoblasts. In the embryonic leg disk, expression is restricted to imaginal cells. Also expressed in the central nervous system (CNS), tracheae and head of stage 14 embryos. CNS and tracheal expression decays during later stages, though head expression persists until late in embryogenesis. In third instar larvae, expression is seen in the brain and in regions of many imaginal tissues including the eye-antennal, wing, leg and haltere disks. Expressed in embryonic, larval and adult male germline stem cells and in the somatic cells of the embryonic gonads.

It is found in the nucleus. Functionally, transcription factor that can both stimulate and repress transcription. Binds to the consensus DNA sequence 5'-A/GCAGGTG-3'. Regulates cell motility and adhesion during tracheal morphogenesis by stimulating transcription of the DE-cadherin gene shg at branch tips, thereby promoting tracheal tube fusion. Maintains diploidy in imaginal cells by inhibiting the transcription of genes required for endoreplication. Required for development of the genital disk and acts as an intrinsic determinant of wing cell fate. The somatic protein is required for maintenance of male germ cells. Acts with other members of the snail protein family to control embryonic central nervous system development. The polypeptide is Protein escargot (esg) (Drosophila melanogaster (Fruit fly)).